The sequence spans 316 residues: Calumenin-B (316 aa).

An N-terminal signal peptide occupies residues 1–19 (MELRPLVMCFALCVVYASS). 6 consecutive EF-hand domains span residues 69–104 (ESKERLGMLVERIDEDKDGYVSVEEMKKWIKHSQKR), 105–140 (WIYDDVDRQWKGHDHNGDGLVSWEEYKNATYGYILD), 152–187 (QMISRDERRFKMSDLDADLKANKEEFTAFLHPEEYD), 189–224 (MKDIVVLETMEDIDKNGDGFIDLEEYIGDMYNQEGD), 230–265 (WVRTEREQFTEFRDTNKDGRMDKEETKDWILPSDYD), and 266–301 (HAEAEAKHLVYESDNDKDGKLTKAEIVEKYDLFVGS). Ca(2+)-binding residues include aspartate 82, aspartate 84, aspartate 86, tyrosine 88, glutamate 93, aspartate 118, asparagine 120, aspartate 122, and glutamate 129. A glycan (N-linked (GlcNAc...) asparagine) is linked at asparagine 132. The Ca(2+) site is built by aspartate 165, aspartate 167, aspartate 169, lysine 171, glutamate 176, aspartate 202, asparagine 204, aspartate 206, glutamate 213, aspartate 243, asparagine 245, aspartate 247, arginine 249, glutamate 254, aspartate 279, aspartate 281, aspartate 283, lysine 285, and glutamate 290. The Prevents secretion from ER motif lies at 313–316 (HDEF).

It belongs to the CREC family. In terms of assembly, interacts with ggcx.

Its subcellular location is the endoplasmic reticulum membrane. The protein localises to the golgi apparatus. It localises to the secreted. It is found in the melanosome. The protein resides in the sarcoplasmic reticulum lumen. Involved in regulation of vitamin K-dependent carboxylation of multiple N-terminal glutamate residues. Seems to inhibit gamma-carboxylase ggcx. Binds 7 calcium ions with a low affinity. The sequence is that of Calumenin-B (calub) from Salmo salar (Atlantic salmon).